Consider the following 165-residue polypeptide: Peptide methionine sulfoxide reductase MsrA (165 aa).

Cys11 is a catalytic residue.

The protein belongs to the MsrA Met sulfoxide reductase family.

It carries out the reaction L-methionyl-[protein] + [thioredoxin]-disulfide + H2O = L-methionyl-(S)-S-oxide-[protein] + [thioredoxin]-dithiol. The catalysed reaction is [thioredoxin]-disulfide + L-methionine + H2O = L-methionine (S)-S-oxide + [thioredoxin]-dithiol. Has an important function as a repair enzyme for proteins that have been inactivated by oxidation. Catalyzes the reversible oxidation-reduction of methionine sulfoxide in proteins to methionine. The polypeptide is Peptide methionine sulfoxide reductase MsrA (Ureaplasma urealyticum serovar 10 (strain ATCC 33699 / Western)).